The primary structure comprises 429 residues: GTPase Obg (429 aa).

The Obg domain occupies 1–158 (MFVDHVKIYV…LNVILELKVL (158 aa)). Positions 119 to 143 (AGRGGRGNSRFATPANPAPELSEKG) are disordered. The OBG-type G domain maps to 159–329 (ADVGLVGFPS…LLFAIADLLE (171 aa)). GTP-binding positions include 165 to 172 (GFPSVGKS), 190 to 194 (FTTIV), 212 to 215 (DLPG), 282 to 285 (NKMD), and 310 to 312 (SAV). The Mg(2+) site is built by Ser-172 and Thr-192. The region spanning 351 to 429 (KHEAKGEDFE…LQEFEFEFVD (79 aa)) is the OCT domain.

It belongs to the TRAFAC class OBG-HflX-like GTPase superfamily. OBG GTPase family. Monomer. The cofactor is Mg(2+).

It localises to the cytoplasm. Its function is as follows. An essential GTPase which binds GTP, GDP and possibly (p)ppGpp with moderate affinity, with high nucleotide exchange rates and a fairly low GTP hydrolysis rate. Plays a role in control of the cell cycle, stress response, ribosome biogenesis and in those bacteria that undergo differentiation, in morphogenesis control. In Lysinibacillus sphaericus (strain C3-41), this protein is GTPase Obg.